The sequence spans 376 residues: Arabinogalactan endo-beta-1,4-galactanase (376 aa).

The signal sequence occupies residues 1–17; that stretch reads MKKKILAATAILLAAIA. The active-site Proton donor is the glutamate 161. Glutamate 270 functions as the Nucleophile in the catalytic mechanism. Ca(2+) contacts are provided by aspartate 281 and asparagine 285.

The protein belongs to the glycosyl hydrolase 53 family. Requires Ca(2+) as cofactor.

The enzyme catalyses The enzyme specifically hydrolyzes (1-&gt;4)-beta-D-galactosidic linkages in type I arabinogalactans.. The chain is Arabinogalactan endo-beta-1,4-galactanase (ganB) from Cellvibrio japonicus (strain Ueda107) (Pseudomonas fluorescens subsp. cellulosa).